The chain runs to 193 residues: CASP-like protein 1E1 (193 aa).

The Cytoplasmic segment spans residues 1-30 (MESQNKASLPVMDGLERRVVASQSEGASTC). The chain crosses the membrane as a helical span at residues 31-51 (DLLLRVLALVLTLAAAIVLGV). Topologically, residues 52-86 (DKQTKVVPIKIVDTLPAINLPVSAKWHYLSAFTYS) are extracellular. A helical transmembrane segment spans residues 87–107 (VASNAIACSYAALSLVLAVSG). The Cytoplasmic segment spans residues 108–113 (KKGIMS). A helical transmembrane segment spans residues 114–134 (IVIVLDLLMVAMLFSSNGAAL). Residues 135–162 (AIGLMGYQGNSHVRWTKVCHVFGRFCNQ) are Extracellular-facing. A helical membrane pass occupies residues 163-183 (VAVSISLSLLGSILFLLLVGI). Over 184-193 (TSLRLHKKSK) the chain is Cytoplasmic.

The protein belongs to the Casparian strip membrane proteins (CASP) family. Homodimer and heterodimers.

The protein resides in the cell membrane. This Populus trichocarpa (Western balsam poplar) protein is CASP-like protein 1E1.